The chain runs to 232 residues: Phosphatidylserine decarboxylase proenzyme (232 aa).

Ser190 (schiff-base intermediate with substrate; via pyruvic acid) is an active-site residue. At Ser190 the chain carries Pyruvic acid (Ser); by autocatalysis.

The protein belongs to the phosphatidylserine decarboxylase family. PSD-A subfamily. As to quaternary structure, heterodimer of a large membrane-associated beta subunit and a small pyruvoyl-containing alpha subunit. The cofactor is pyruvate. Post-translationally, is synthesized initially as an inactive proenzyme. Formation of the active enzyme involves a self-maturation process in which the active site pyruvoyl group is generated from an internal serine residue via an autocatalytic post-translational modification. Two non-identical subunits are generated from the proenzyme in this reaction, and the pyruvate is formed at the N-terminus of the alpha chain, which is derived from the carboxyl end of the proenzyme. The post-translation cleavage follows an unusual pathway, termed non-hydrolytic serinolysis, in which the side chain hydroxyl group of the serine supplies its oxygen atom to form the C-terminus of the beta chain, while the remainder of the serine residue undergoes an oxidative deamination to produce ammonia and the pyruvoyl prosthetic group on the alpha chain.

The protein localises to the cell membrane. The enzyme catalyses a 1,2-diacyl-sn-glycero-3-phospho-L-serine + H(+) = a 1,2-diacyl-sn-glycero-3-phosphoethanolamine + CO2. The protein operates within phospholipid metabolism; phosphatidylethanolamine biosynthesis; phosphatidylethanolamine from CDP-diacylglycerol: step 2/2. Catalyzes the formation of phosphatidylethanolamine (PtdEtn) from phosphatidylserine (PtdSer). The sequence is that of Phosphatidylserine decarboxylase proenzyme from Rhodopseudomonas palustris (strain TIE-1).